We begin with the raw amino-acid sequence, 598 residues long: UvrABC system protein C (598 aa).

Positions 13 to 92 (SSPGVYLMKD…IKKYQPRYNV (80 aa)) constitute a GIY-YIG domain. A UVR domain is found at 206–241 (RSTISNLEKAIEKASQEQKFEHAAALYRTLTLIRQT).

The protein belongs to the UvrC family. Interacts with UvrB in an incision complex.

It localises to the cytoplasm. In terms of biological role, the UvrABC repair system catalyzes the recognition and processing of DNA lesions. UvrC both incises the 5' and 3' sides of the lesion. The N-terminal half is responsible for the 3' incision and the C-terminal half is responsible for the 5' incision. In Chlamydia trachomatis serovar A (strain ATCC VR-571B / DSM 19440 / HAR-13), this protein is UvrABC system protein C.